Consider the following 290-residue polypeptide: MKSGFAAILGRPSTGKSTLLNSICGHKISIISPIPQTTRNKIKGIFTDDRGQIIFIDTPGFHLSKKKFNIAMMKNIHSSIGEVELILYIIDIQDKPGEEENKILEIIKNSKIKFLVLLNKVDLKNTKIKEITQFLKEKEIEDNNIIKISAEKKINTEELKNKIYENFSEGPLYYPQEYYTDQEINFRISEIIREKAIENLKEELPYSLYVDIDILENKKGSLFIRANIFVANESQKGIIVGKNGKEIKSIGERARITIAKIFETKCNLFLQVKLKKNWNKEDKLIKRLIN.

One can recognise an Era-type G domain in the interval lysine 2 to glutamate 169. The G1 stretch occupies residues glycine 10–serine 17. Glycine 10 to serine 17 provides a ligand contact to GTP. Residues glutamine 36–asparagine 40 are G2. Residues aspartate 57–glycine 60 form a G3 region. Residues aspartate 57–phenylalanine 61 and asparagine 119–aspartate 122 each bind GTP. Residues asparagine 119–aspartate 122 form a G4 region. The tract at residues isoleucine 148–alanine 150 is G5. Residues leucine 200 to lysine 276 enclose the KH type-2 domain.

It belongs to the TRAFAC class TrmE-Era-EngA-EngB-Septin-like GTPase superfamily. Era GTPase family. As to quaternary structure, monomer.

It is found in the cytoplasm. It localises to the cell inner membrane. An essential GTPase that binds both GDP and GTP, with rapid nucleotide exchange. Plays a role in 16S rRNA processing and 30S ribosomal subunit biogenesis and possibly also in cell cycle regulation and energy metabolism. The protein is GTPase Era of Borrelia garinii subsp. bavariensis (strain ATCC BAA-2496 / DSM 23469 / PBi) (Borreliella bavariensis).